The sequence spans 553 residues: Dihydroxy-acid dehydratase (553 aa).

C49 provides a ligand contact to [2Fe-2S] cluster. D81 contacts Mg(2+). C122 provides a ligand contact to [2Fe-2S] cluster. Mg(2+)-binding residues include D123 and K124. Residue K124 is modified to N6-carboxylysine. Position 194 (C194) interacts with [2Fe-2S] cluster. E444 serves as a coordination point for Mg(2+). S470 serves as the catalytic Proton acceptor.

Belongs to the IlvD/Edd family. As to quaternary structure, homodimer. The cofactor is [2Fe-2S] cluster. Mg(2+) is required as a cofactor.

The enzyme catalyses (2R)-2,3-dihydroxy-3-methylbutanoate = 3-methyl-2-oxobutanoate + H2O. It carries out the reaction (2R,3R)-2,3-dihydroxy-3-methylpentanoate = (S)-3-methyl-2-oxopentanoate + H2O. It participates in amino-acid biosynthesis; L-isoleucine biosynthesis; L-isoleucine from 2-oxobutanoate: step 3/4. It functions in the pathway amino-acid biosynthesis; L-valine biosynthesis; L-valine from pyruvate: step 3/4. Functions in the biosynthesis of branched-chain amino acids. Catalyzes the dehydration of (2R,3R)-2,3-dihydroxy-3-methylpentanoate (2,3-dihydroxy-3-methylvalerate) into 2-oxo-3-methylpentanoate (2-oxo-3-methylvalerate) and of (2R)-2,3-dihydroxy-3-methylbutanoate (2,3-dihydroxyisovalerate) into 2-oxo-3-methylbutanoate (2-oxoisovalerate), the penultimate precursor to L-isoleucine and L-valine, respectively. This chain is Dihydroxy-acid dehydratase, found in Aeropyrum pernix (strain ATCC 700893 / DSM 11879 / JCM 9820 / NBRC 100138 / K1).